The following is a 415-amino-acid chain: Casein kinase I isoform delta (415 aa).

Residues 9-277 enclose the Protein kinase domain; it reads YRLGRKIGSG…YLRQLFRNLF (269 aa). Residues 15–23 and Lys-38 each bind ATP; that span reads IGSGSFGDI. Asp-128 (proton acceptor) is an active-site residue. Residues 278–364 form a centrosomal localization signal (CLS) region; sequence HRQGFSYDYV…TSPRPVSGME (87 aa). The segment covering 301–315 has biased composition (basic and acidic residues); it reads ADDAERERRDREERL. The disordered stretch occupies residues 301-415; it reads ADDAERERRD…SSGLQSVVHR (115 aa). The tract at residues 317 to 342 is autoinhibitory; the sequence is HSRNPATRGLPSTASGRLRGTQEVAP. 2 positions are modified to phosphoserine: Ser-328 and Ser-331. Over residues 347–358 the composition is skewed to polar residues; the sequence is TPTSHTANTSPR. Phosphoserine is present on Ser-370. Arg-375 bears the Omega-N-methylarginine mark. Positions 380-400 are enriched in polar residues; sequence NISSSDLTGRQDTSRMSTSQI. 5 positions are modified to phosphoserine: Ser-382, Ser-383, Ser-384, Ser-407, and Ser-411.

It belongs to the protein kinase superfamily. CK1 Ser/Thr protein kinase family. Casein kinase I subfamily. Monomer. Component of the circadian core oscillator, which includes the CRY proteins, CLOCK, or NPAS2, ARTNL/BMAL1 or ARTNL2/BMAL2, CSNK1D and/or CSNK1E, TIMELESS and the PER proteins. Interacts with DNMT1 and MAP1A. Interacts directly with PER1 and PER2 which may lead to their degradation. Interacts with MAPT/TAU, SNAPIN, DBNDD2, AIB1/NCOA3 and ESR1. Interacts with AKAP9/AKAP450; this interaction promotes centrosomal subcellular location. Binds to tubulins in mitotic cells upon DNA damage. Interacts with GJA1. Interacts with DDX3X; this interaction enhances CSNK1D kinase activity in vitro, but it is unclear whether this interaction is physiologically relevant. Interacts with FAM83A, FAM83B, FAM83E and FAM83H (via DUF1669). Autophosphorylated on serine and threonine residues; this autophosphorylation represses activity. Reactivated by phosphatase-mediated dephosphorylation. May be dephosphorylated by PP1.

It is found in the cytoplasm. Its subcellular location is the nucleus. It localises to the cytoskeleton. The protein resides in the microtubule organizing center. The protein localises to the centrosome. It is found in the perinuclear region. Its subcellular location is the cell membrane. It localises to the spindle. The protein resides in the golgi apparatus. The enzyme catalyses L-seryl-[protein] + ATP = O-phospho-L-seryl-[protein] + ADP + H(+). It catalyses the reaction L-threonyl-[protein] + ATP = O-phospho-L-threonyl-[protein] + ADP + H(+). The catalysed reaction is L-seryl-[tau protein] + ATP = O-phospho-L-seryl-[tau protein] + ADP + H(+). It carries out the reaction L-threonyl-[tau protein] + ATP = O-phospho-L-threonyl-[tau protein] + ADP + H(+). Drug-mediated inhibition leads to a delay of the oscillations with the magnitude of this effect dependent upon the timing of drug administration. Inhibited by phosphorylation. Exhibits substrate-dependent heparin activation. Essential serine/threonine-protein kinase that regulates diverse cellular growth and survival processes including Wnt signaling, DNA repair and circadian rhythms. It can phosphorylate a large number of proteins. Casein kinases are operationally defined by their preferential utilization of acidic proteins such as caseins as substrates. Phosphorylates connexin-43/GJA1, MAP1A, SNAPIN, MAPT/TAU, TOP2A, DCK, HIF1A, EIF6, p53/TP53, DVL2, DVL3, ESR1, AIB1/NCOA3, DNMT1, PKD2, YAP1, PER1 and PER2. Central component of the circadian clock. In balance with PP1, determines the circadian period length through the regulation of the speed and rhythmicity of PER1 and PER2 phosphorylation. Controls PER1 and PER2 nuclear transport and degradation. YAP1 phosphorylation promotes its SCF(beta-TRCP) E3 ubiquitin ligase-mediated ubiquitination and subsequent degradation. DNMT1 phosphorylation reduces its DNA-binding activity. Phosphorylation of ESR1 and AIB1/NCOA3 stimulates their activity and coactivation. Phosphorylation of DVL2 and DVL3 regulates WNT3A signaling pathway that controls neurite outgrowth. Phosphorylates NEDD9/HEF1. EIF6 phosphorylation promotes its nuclear export. Triggers down-regulation of dopamine receptors in the forebrain. Activates DCK in vitro by phosphorylation. TOP2A phosphorylation favors DNA cleavable complex formation. May regulate the formation of the mitotic spindle apparatus in extravillous trophoblast. Modulates connexin-43/GJA1 gap junction assembly by phosphorylation. Probably involved in lymphocyte physiology. Regulates fast synaptic transmission mediated by glutamate. This chain is Casein kinase I isoform delta (CSNK1D), found in Bos taurus (Bovine).